The following is a 464-amino-acid chain: GPI mannosyltransferase 2 (464 aa).

The Cytoplasmic portion of the chain corresponds to 1 to 70 (MYYIGHPSYY…MTRSGYNYFK (70 aa)). The helical transmembrane segment at 71–91 (GICVCTFLLSTILYLGIAVIM) threads the bilayer. Topologically, residues 92-166 (SHLCVFDDTA…ISFLAFRSKD (75 aa)) are lumenal. N-linked (GlcNAc...) asparagine glycans are attached at residues Asn108 and Asn139. A helical transmembrane segment spans residues 167-187 (VVLLGIVSCFASIFFHAIACY). At 188-219 (ALYLLTKSIFSNQKMTAYTVIFYCFSPSGIYM) the chain is on the cytoplasmic side. A helical membrane pass occupies residues 220–240 (SVGYTESLFAAFSFLGLLLFI). The Lumenal segment spans residues 241 to 260 (KKQQYPAAFLWSLATLIRSN). A helical transmembrane segment spans residues 261–281 (GIFWCIFFGMPAIGTLKISLE). The Cytoplasmic segment spans residues 282-289 (RLQLTFMQ). A helical transmembrane segment spans residues 290–309 (VSQLVGYGTKCLIILVPFFY). At 310-356 (NQYLGFKLFCPGVAWCNKSLPLIYPAVQEKYWNVGFLRYWTLNNIPN) the chain is on the lumenal side. N-linked (GlcNAc...) asparagine glycosylation occurs at Asn326. Residues 357–377 (FLFALLSIIPILFALFYSISG) form a helical membrane-spanning segment. Residues 378–388 (STLHSFRSIKS) lie on the Cytoplasmic side of the membrane. Residues 389 to 409 (HLVLSALYLYIGCFHMHTQVL) traverse the membrane as a helical segment. Residues 410–440 (NRMSSALPLLYWSMAHATLYAKSRNLKAFGH) lie on the Lumenal side of the membrane. The helical transmembrane segment at 441–461 (CILFVWIVYTVIQAGLYGSFL) threads the bilayer. Residues 462 to 464 (PPA) are Cytoplasmic-facing.

Belongs to the PIGV family. In terms of assembly, part of the GPI mannosyltransferase 2 complex composed of gpi18 and C167.09.

It localises to the endoplasmic reticulum membrane. It participates in glycolipid biosynthesis; glycosylphosphatidylinositol-anchor biosynthesis. Functionally, mannosyltransferase involved in glycosylphosphatidylinositol-anchor biosynthesis. Responsible for the transfer of the second mannose to the glycosylphosphatidylinositol during GPI precursor assembly. In Schizosaccharomyces pombe (strain 972 / ATCC 24843) (Fission yeast), this protein is GPI mannosyltransferase 2 (gpi18).